The following is a 185-amino-acid chain: Ribosome-recycling factor (185 aa).

It belongs to the RRF family.

It localises to the cytoplasm. In terms of biological role, responsible for the release of ribosomes from messenger RNA at the termination of protein biosynthesis. May increase the efficiency of translation by recycling ribosomes from one round of translation to another. The chain is Ribosome-recycling factor from Rhodococcus erythropolis (strain PR4 / NBRC 100887).